Reading from the N-terminus, the 297-residue chain is Putative thiosulfate sulfurtransferase SseA (297 aa).

2 consecutive Rhodanese domains span residues 31 to 138 (GAPG…ETTL) and 168 to 286 (ILGA…VPIV). Residue cysteine 245 is the Cysteine persulfide intermediate of the active site. Substrate is bound at residue arginine 250.

The catalysed reaction is thiosulfate + hydrogen cyanide = thiocyanate + sulfite + 2 H(+). The chain is Putative thiosulfate sulfurtransferase SseA (sseA) from Mycobacterium tuberculosis (strain CDC 1551 / Oshkosh).